An 859-amino-acid polypeptide reads, in one-letter code: MADYTPMMQQYLQIKEEQQDAILFFRLGDFYEMFFEDARIASRELEIVLTARDGGAGSKIPMCGVPYHSVDNYLARLINRGYKVAICEQVEDPREAKGIVKREVTRIVTPGTIIEEQLLDQAKNNFLAAVEEEPLCTGIAYIDISTGEFWLSEIAGENARSRVESEILRISPAECLLAGSGSLTGSWEEEWLRQQNITLTVWDELPLSLERAESLLLRQLQVASLESFGLKSYSAGIKAAARIIAFLEETQKTSLQHIKSLRCYSSDNFLEMDFYSRRNLELTATLREGKREGSLLSILDESRTAMGKRLLRRWIEQPLREAGEIEERLDAVDELKNTLSLRTELTPLLSRINDLERLGGKIGASVASPRDLLGLKSSLAVINDIKKALQPCRSEILQRLAAMDALEEVFALIDASINDEAPLGIKEGELIKTGYKQEIDELRELSQEGSNWLVEFENREKQRTGIKNLKVGFNKVFGYYIEITKSNLSLAPADYHRKQTLVNSERFISDELKQYEEKILGSRERLYSLEYQEFIKIREALIPYLPRVMETAHAIAILDVLQGLAEVAYQNNYIRPEIDNSGKIRIRAGRHPVVEKALREARFVPNDLQLDRDKARFAIITGPNMGGKSTFMRQAALLVLMAQMGSFIPAEEARIGLVDKIFTRVGASDDLAAGQSTFMVEMIEVANILNNASDNSLVILDEIGRGTSTYDGLSIAQAVSEYLLENSRSKVLFATHYHQLTRLAEKLPGIINLSVSVKETGNTVVFLKKVLPGKADKSYGLHVARLAGLPEKLIIRAEDILQGLEKNKDSRPAPTLLQPLLFSDSHPVVDELKQLHIDDLSPREALQLLYQWQKMLDDK.

Residue 622-629 coordinates ATP; the sequence is GPNMGGKS.

The protein belongs to the DNA mismatch repair MutS family.

This protein is involved in the repair of mismatches in DNA. It is possible that it carries out the mismatch recognition step. This protein has a weak ATPase activity. The chain is DNA mismatch repair protein MutS from Syntrophomonas wolfei subsp. wolfei (strain DSM 2245B / Goettingen).